The chain runs to 169 residues: MPFANEGNDPIAARLSKCYWNLSSPFLKDVIPKKRPSKAFNRKPPTKLESEEEEYHKFERGLHISDLGPKLKETDGQPKLKFELADDYKSSKHCICMRSNTAYECERCHQYFYGRLAQICDLHPNEFFLMDFRNCPFCKAPIEMIKKSPISWETIRKIEEAELPSDGDL.

A Phosphoserine modification is found at Ser-165.

This is an uncharacterized protein from Drosophila melanogaster (Fruit fly).